A 351-amino-acid chain; its full sequence is Nicotinate-nucleotide--dimethylbenzimidazole phosphoribosyltransferase (351 aa).

Glu-317 acts as the Proton acceptor in catalysis.

The protein belongs to the CobT family.

The catalysed reaction is 5,6-dimethylbenzimidazole + nicotinate beta-D-ribonucleotide = alpha-ribazole 5'-phosphate + nicotinate + H(+). Its pathway is nucleoside biosynthesis; alpha-ribazole biosynthesis; alpha-ribazole from 5,6-dimethylbenzimidazole: step 1/2. Its function is as follows. Catalyzes the synthesis of alpha-ribazole-5'-phosphate from nicotinate mononucleotide (NAMN) and 5,6-dimethylbenzimidazole (DMB). The chain is Nicotinate-nucleotide--dimethylbenzimidazole phosphoribosyltransferase from Pseudomonas fluorescens (strain SBW25).